A 211-amino-acid polypeptide reads, in one-letter code: Probable endo-1,4-beta-xylanase 5 (211 aa).

Positions 1 to 16 are cleaved as a signal peptide; it reads MKVTAAFASLLLTAFA. The GH11 domain occupies 19 to 210; the sequence is APEPVLVSRS…GAGSASVTIS (192 aa). Residue glutamate 106 is the Nucleophile of the active site. Residue glutamate 197 is the Proton donor of the active site.

This sequence belongs to the glycosyl hydrolase 11 (cellulase G) family.

The protein resides in the secreted. It carries out the reaction Endohydrolysis of (1-&gt;4)-beta-D-xylosidic linkages in xylans.. It participates in glycan degradation; xylan degradation. Endo-1,4-beta-xylanase involved in the hydrolysis of xylan, a major structural heterogeneous polysaccharide found in plant biomass representing the second most abundant polysaccharide in the biosphere, after cellulose. This chain is Probable endo-1,4-beta-xylanase 5 (XYN5), found in Aspergillus niger (strain ATCC MYA-4892 / CBS 513.88 / FGSC A1513).